Reading from the N-terminus, the 241-residue chain is Protein TraL (241 aa).

The protein to plasmid R751 TraL.

The protein is Protein TraL (traL) of Escherichia coli.